Consider the following 253-residue polypeptide: Ubiquinone/menaquinone biosynthesis C-methyltransferase UbiE (253 aa).

S-adenosyl-L-methionine-binding positions include threonine 76, aspartate 97, and 125 to 126 (NA).

The protein belongs to the class I-like SAM-binding methyltransferase superfamily. MenG/UbiE family.

It carries out the reaction a 2-demethylmenaquinol + S-adenosyl-L-methionine = a menaquinol + S-adenosyl-L-homocysteine + H(+). It catalyses the reaction a 2-methoxy-6-(all-trans-polyprenyl)benzene-1,4-diol + S-adenosyl-L-methionine = a 5-methoxy-2-methyl-3-(all-trans-polyprenyl)benzene-1,4-diol + S-adenosyl-L-homocysteine + H(+). The protein operates within quinol/quinone metabolism; menaquinone biosynthesis; menaquinol from 1,4-dihydroxy-2-naphthoate: step 2/2. It functions in the pathway cofactor biosynthesis; ubiquinone biosynthesis. Its function is as follows. Methyltransferase required for the conversion of demethylmenaquinol (DMKH2) to menaquinol (MKH2) and the conversion of 2-polyprenyl-6-methoxy-1,4-benzoquinol (DDMQH2) to 2-polyprenyl-3-methyl-6-methoxy-1,4-benzoquinol (DMQH2). This is Ubiquinone/menaquinone biosynthesis C-methyltransferase UbiE from Bradyrhizobium diazoefficiens (strain JCM 10833 / BCRC 13528 / IAM 13628 / NBRC 14792 / USDA 110).